We begin with the raw amino-acid sequence, 506 residues long: 2,3-bisphosphoglycerate-independent phosphoglycerate mutase (506 aa).

Mn(2+) contacts are provided by Asp-9 and Ser-59. Ser-59 functions as the Phosphoserine intermediate in the catalytic mechanism. Residues His-120, 149–150 (RD), Arg-181, Arg-187, 254–257 (RADR), and Lys-327 contribute to the substrate site. Asp-394, His-398, Asp-435, His-436, and His-452 together coordinate Mn(2+).

The protein belongs to the BPG-independent phosphoglycerate mutase family. Mn(2+) is required as a cofactor.

It carries out the reaction (2R)-2-phosphoglycerate = (2R)-3-phosphoglycerate. The protein operates within carbohydrate degradation; glycolysis; pyruvate from D-glyceraldehyde 3-phosphate: step 3/5. Catalyzes the interconversion of 2-phosphoglycerate and 3-phosphoglycerate. The sequence is that of 2,3-bisphosphoglycerate-independent phosphoglycerate mutase from Natronomonas pharaonis (strain ATCC 35678 / DSM 2160 / CIP 103997 / JCM 8858 / NBRC 14720 / NCIMB 2260 / Gabara) (Halobacterium pharaonis).